A 223-amino-acid polypeptide reads, in one-letter code: Thiopurine S-methyltransferase (223 aa).

Positions 10, 45, 66, and 127 each coordinate S-adenosyl-L-methionine.

The protein belongs to the class I-like SAM-binding methyltransferase superfamily. TPMT family.

The protein resides in the cytoplasm. It catalyses the reaction S-adenosyl-L-methionine + a thiopurine = S-adenosyl-L-homocysteine + a thiopurine S-methylether.. The polypeptide is Thiopurine S-methyltransferase (Shewanella woodyi (strain ATCC 51908 / MS32)).